A 317-amino-acid chain; its full sequence is Melanocyte-stimulating hormone receptor (317 aa).

The Extracellular portion of the chain corresponds to 1 to 37 (MAVQGSQRRLLGSLNSTPTAIPQLGLAANQTGARCLE). Residue Asn-29 is glycosylated (N-linked (GlcNAc...) asparagine). The helical transmembrane segment at 38–63 (VSIPDGLFLSLGLVSLVENMLVVATI) threads the bilayer. At 64–72 (AKNRNLHSP) the chain is on the cytoplasmic side. A helical transmembrane segment spans residues 73–93 (MYCFICCLALSDLLVSGSNVL). The Extracellular portion of the chain corresponds to 94 to 118 (ETAVILLLEAGALVARAAVLQQVDN). Residues 119 to 140 (VIDVITCSSMLSSLCFLGAIAV) form a helical membrane-spanning segment. At 141 to 163 (DRYISIFYALRYHSIVTLPRARR) the chain is on the cytoplasmic side. The helical transmembrane segment at 164 to 183 (AIAAIWVASVLFSTLFIAYC) threads the bilayer. The Extracellular segment spans residues 184–191 (DHTAVLLC). The chain crosses the membrane as a helical span at residues 192–211 (LVVFFLAVLVLMAVLYVHML). Residues 212-240 (ARACQHAQGIARLHKRQRPVHQGFGLKGA) are Cytoplasmic-facing. Residues 241-266 (VTLTILLGIFFLCWGPFFLHLTLIVL) form a helical membrane-spanning segment. The Extracellular segment spans residues 267–279 (CPEHPTCGCIFKN). The chain crosses the membrane as a helical span at residues 280–300 (FNLFLALIICNAIIDPLIYAF). At 301 to 317 (HSQELRRTLKEVLTCSW) the chain is on the cytoplasmic side. A lipid anchor (S-palmitoyl cysteine) is attached at Cys-315.

It belongs to the G-protein coupled receptor 1 family. Interacts with MGRN1, but does not undergo MGRN1-mediated ubiquitination; this interaction competes with GNAS-binding and thus inhibits agonist-induced cAMP production. Interacts with OPN3; the interaction results in a decrease in MC1R-mediated cAMP signaling and ultimately a decrease in melanin production in melanocytes.

The protein resides in the cell membrane. In terms of biological role, receptor for MSH (alpha, beta and gamma) and ACTH. The activity of this receptor is mediated by G proteins which activate adenylate cyclase. Mediates melanogenesis, the production of eumelanin (black/brown) and phaeomelanin (red/yellow), via regulation of cAMP signaling in melanocytes. This is Melanocyte-stimulating hormone receptor (MC1R) from Pan troglodytes (Chimpanzee).